The following is a 690-amino-acid chain: Eukaryotic translation initiation factor 3 subunit B (690 aa).

Residues 1–11 (MAKKKSEEHSS) show a composition bias toward basic and acidic residues. Positions 1-33 (MAKKKSEEHSSADANDSDYQEEPNFDDPPNFVD) are disordered. The segment covering 15-25 (NDSDYQEEPNF) has biased composition (acidic residues). Residues 57–141 (SVVVVDNIPK…HTFAVNLFTD (85 aa)) enclose the RRM domain. WD repeat units follow at residues 207-246 (TRERFTDTFVKWSPLGTYVVTFHKPGVAIWGGSNFQKIQK), 293-331 (DGMSVLSMFRWSHDDKFVARMGENSIHIYETPSFYLLDL), 334-369 (IKIPGIRGFSWSPTDNVIAYWVEEQNQIPARVTLME), 442-484 (EIRE…KPSL), and 530-575 (PDHF…IKRT). A coiled-coil region spans residues 614-645 (QKDRLRLTRASKELLEKRSQLRETFMEYRNKR).

It belongs to the eIF-3 subunit B family. In terms of assembly, component of the eukaryotic translation initiation factor 3 (eIF-3) complex. The eIF-3 complex interacts with pix. Interacts with mxt.

It is found in the cytoplasm. RNA-binding component of the eukaryotic translation initiation factor 3 (eIF-3) complex, which is involved in protein synthesis of a specialized repertoire of mRNAs and, together with other initiation factors, stimulates binding of mRNA and methionyl-tRNAi to the 40S ribosome. The eIF-3 complex specifically targets and initiates translation of a subset of mRNAs involved in cell proliferation. The protein is Eukaryotic translation initiation factor 3 subunit B of Drosophila willistoni (Fruit fly).